A 193-amino-acid polypeptide reads, in one-letter code: MAAIRKKLVIVGDGACGKTCLLIVFSKDQFPEVYVPTVFENYVADIEVDGKQVELALWDTAGQEDYDRLRPLSYPDTDVILMCFSIDSPDSLENIPEKWTPEVKHFCPNVPIILVGNKKDLRNDEHTRRELAKMKQEPVKPEEGRDMANRIGAFGYMECSAKTKDGVREVFEMATRAALQARRGKKKSGCLIL.

GTP-binding positions include 12–19 (GDGACGKT), 30–37 (FPEVYVPT), 59–63 (DTAGQ), and 117–120 (NKKD). Residues 34–42 (YVPTVFENY) carry the Effector region motif. The tract at residues 61–78 (AGQEDYDRLRPLSYPDTD) is switch II region; involved in RAP1GDS1 isoform 3 binding. Q63 is subject to 5-glutamyl serotonin. K135 participates in a covalent cross-link: Glycyl lysine isopeptide (Lys-Gly) (interchain with G-Cter in ubiquitin). A GTP-binding site is contributed by 160–162 (SAK). Phosphoserine; by PKG/PRKG1 is present on S188. C190 carries the post-translational modification Cysteine methyl ester. Residue C190 is the site of S-geranylgeranyl cysteine attachment. The propeptide at 191–193 (LIL) is removed in mature form.

This sequence belongs to the small GTPase superfamily. Rho family. Interacts with ARHGEF28. Interacts (via GTP-bound form) with RIPOR1 (via N-terminus); this interaction links RHOA to STK24 and STK26 kinases. Interacts with RIPOR2 (via active GTP- or inactive GDP-bound forms) isoform 1 and isoform 2; these interactions are direct, block the loading of GTP to RHOA and decrease upon chemokine CCL19 stimulation in primary T lymphocytes. Binds PRKCL1, ROCK1 and ROCK2. Interacts with ARHGEF2, ARHGEF3, NET1 and RTKN. Interacts with PLCE1 and AKAP13. Interacts with DIAPH1. Interacts (in the constitutively activated, GTP-bound form) with DGKQ. Interacts with RACK1; enhances RHOA activation. Interacts with PKP4; the interaction is detected at the midbody. Interacts (GTP-bound form preferentially) with PKN2; the interaction stimulates autophosphorylation and phosphorylation of PKN2. Interacts with ARHGDIA; this interaction inactivates and stabilizes RHOA. Interacts with ARHGDIB. Interacts (GTP-bound form) with KCNA2 (via cytoplasmic N-terminal domain). Interacts (GTP-bound form) with ECT2; the interaction results in allosteric activation of ECT2. Interacts with RAP1GDS1; the interaction is direct and in a 1:1 stoichiometry. In terms of processing, ubiquitinated by the BCR(KCTD13) and BCR(TNFAIP1) E3 ubiquitin ligase complexes, leading to its degradation by the proteasome, thereby regulating the actin cytoskeleton and synaptic transmission in neurons. Ubiquitinated at Lys-135 in a FBXL19-mediated manner; leading to proteasomal degradation. Phosphorylation by PRKG1 at Ser-188 inactivates RHOA signaling. Phosphorylation by SLK at Ser-188 in response to AGTR2 activation. Post-translationally, serotonylation of Gln-63 by TGM2 during activation and aggregation of platelets leads to constitutive activation of GTPase activity.

The protein resides in the cell membrane. It localises to the cytoplasm. It is found in the cytoskeleton. The protein localises to the cleavage furrow. Its subcellular location is the cell cortex. The protein resides in the midbody. It localises to the cell projection. It is found in the lamellipodium. The protein localises to the dendrite. Its subcellular location is the nucleus. It catalyses the reaction GTP + H2O = GDP + phosphate + H(+). With respect to regulation, regulated by guanine nucleotide exchange factors (GEFs) which promote the exchange of bound GDP for free GTP, GTPase activating proteins (GAPs) which increase the GTP hydrolysis activity and GDP dissociation inhibitors which inhibit the dissociation of the nucleotide from the GTPase. Activated by GEFs such as ARHGEF2, ARHGEF3, ARHGEF28 and BCR. Inhibited by GAPs such as ARHGAP30. Inhibited by GDP dissociation inhibitors such as ARHGDIA. Functionally, small GTPase which cycles between an active GTP-bound and an inactive GDP-bound state. Mainly associated with cytoskeleton organization, in active state binds to a variety of effector proteins to regulate cellular responses such as cytoskeletal dynamics, cell migration and cell cycle. Regulates a signal transduction pathway linking plasma membrane receptors to the assembly of focal adhesions and actin stress fibers. Involved in a microtubule-dependent signal that is required for the myosin contractile ring formation during cell cycle cytokinesis. Plays an essential role in cleavage furrow formation. Required for the apical junction formation of keratinocyte cell-cell adhesion. Essential for the SPATA13-mediated regulation of cell migration and adhesion assembly and disassembly. The MEMO1-RHOA-DIAPH1 signaling pathway plays an important role in ERBB2-dependent stabilization of microtubules at the cell cortex. It controls the localization of APC and CLASP2 to the cell membrane, via the regulation of GSK3B activity. In turn, membrane-bound APC allows the localization of the MACF1 to the cell membrane, which is required for microtubule capture and stabilization. Regulates KCNA2 potassium channel activity by reducing its location at the cell surface in response to CHRM1 activation; promotes KCNA2 endocytosis. Acts as an allosteric activator of guanine nucleotide exchange factor ECT2 by binding in its activated GTP-bound form to the PH domain of ECT2 which stimulates the release of PH inhibition and promotes the binding of substrate RHOA to the ECT2 catalytic center. May be an activator of PLCE1. In neurons, involved in the inhibition of the initial spine growth. Upon activation by CaMKII, modulates dendritic spine structural plasticity by relaying CaMKII transient activation to synapse-specific, long-term signaling. Acts as a regulator of platelet alpha-granule release during activation and aggregation of platelets. When activated by DAAM1 may signal centrosome maturation and chromosomal segregation during cell division. May also be involved in contractile ring formation during cytokinesis. This Mus musculus (Mouse) protein is Transforming protein RhoA (Rhoa).